A 448-amino-acid polypeptide reads, in one-letter code: Cysteine--tRNA ligase (448 aa).

Cysteine 27 is a binding site for Zn(2+). The 'HIGH' region motif lies at proline 29–asparagine 39. Positions 210, 235, and 239 each coordinate Zn(2+). Residues lysine 267–serine 271 carry the 'KMSKS' region motif. Position 270 (lysine 270) interacts with ATP.

This sequence belongs to the class-I aminoacyl-tRNA synthetase family. In terms of assembly, monomer. Zn(2+) serves as cofactor.

The protein localises to the cytoplasm. It carries out the reaction tRNA(Cys) + L-cysteine + ATP = L-cysteinyl-tRNA(Cys) + AMP + diphosphate. In Lactococcus lactis subsp. lactis (strain IL1403) (Streptococcus lactis), this protein is Cysteine--tRNA ligase.